The following is a 158-amino-acid chain: Peptide deformylase (158 aa).

Cysteine 88 and histidine 130 together coordinate Fe cation. Glutamate 131 is a catalytic residue. Histidine 134 is a Fe cation binding site.

Belongs to the polypeptide deformylase family. Fe(2+) is required as a cofactor.

It catalyses the reaction N-terminal N-formyl-L-methionyl-[peptide] + H2O = N-terminal L-methionyl-[peptide] + formate. Its function is as follows. Removes the formyl group from the N-terminal Met of newly synthesized proteins. Requires at least a dipeptide for an efficient rate of reaction. N-terminal L-methionine is a prerequisite for activity but the enzyme has broad specificity at other positions. The chain is Peptide deformylase from Agathobacter rectalis (strain ATCC 33656 / DSM 3377 / JCM 17463 / KCTC 5835 / VPI 0990) (Eubacterium rectale).